The primary structure comprises 319 residues: RWD domain-containing protein 2B (319 aa).

Residues 41–165 (SELDLLASMF…EWVREHASGY (125 aa)) enclose the RWD domain. Ser-275 is modified (phosphoserine).

This chain is RWD domain-containing protein 2B (RWDD2B), found in Pongo abelii (Sumatran orangutan).